The primary structure comprises 225 residues: 2-C-methyl-D-erythritol 4-phosphate cytidylyltransferase (225 aa).

This sequence belongs to the IspD/TarI cytidylyltransferase family. IspD subfamily.

The catalysed reaction is 2-C-methyl-D-erythritol 4-phosphate + CTP + H(+) = 4-CDP-2-C-methyl-D-erythritol + diphosphate. Its pathway is isoprenoid biosynthesis; isopentenyl diphosphate biosynthesis via DXP pathway; isopentenyl diphosphate from 1-deoxy-D-xylulose 5-phosphate: step 2/6. Catalyzes the formation of 4-diphosphocytidyl-2-C-methyl-D-erythritol from CTP and 2-C-methyl-D-erythritol 4-phosphate (MEP). The chain is 2-C-methyl-D-erythritol 4-phosphate cytidylyltransferase from Prochlorococcus marinus (strain NATL2A).